A 517-amino-acid chain; its full sequence is Splicing factor cactin (517 aa).

A compositionally biased stretch (basic and acidic residues) spans 1-14 (MAFRDSTRDFNRSR). A disordered region spans residues 1-59 (MAFRDSTRDFNRSRPEKRHASRSSSPRSFRPSNQNARANYNLPRVRDAMKEEERSRETK). Low complexity predominate over residues 22–32 (RSSSPRSFRPS). Basic and acidic residues predominate over residues 44–59 (RVRDAMKEEERSRETK).

It belongs to the CACTIN family. As to quaternary structure, interacts with sde2. Interacts with cdc5.

In terms of biological role, plays a role in pre-mRNA splicing by facilitating excision of introns featuring long spacing between the branchpoint and 3'-splice site (ss). Recruited to the spliceosome by sde2, which may enable folding of the RNA between the BP and 3'-ss to guide the splice site towards the spliceosome's catalytic center. Assists the splicing of several components involved in chromatin organization. The protein is Splicing factor cactin of Schizosaccharomyces pombe (strain 972 / ATCC 24843) (Fission yeast).